The primary structure comprises 102 residues: UPF0235 protein Swol_0959 (102 aa).

It belongs to the UPF0235 family.

The sequence is that of UPF0235 protein Swol_0959 from Syntrophomonas wolfei subsp. wolfei (strain DSM 2245B / Goettingen).